Here is a 419-residue protein sequence, read N- to C-terminus: NF-kappa-B essential modulator (419 aa).

Residues 1 to 48 (MSRPPWKSPLCEMVQPSGSPAGDQDMLGEESSLGKPAMLHVPSEQGTP) form a disordered region. Residues 1–197 (MSRPPWKSPL…REALEQRHSV (197 aa)) are required for interaction with and ubiquitination by MARCHF2. Phosphoserine; by IKKB is present on residues Ser-31 and Ser-43. The interaction with CHUK/IKBKB stretch occupies residues 44–111 (EQGTPETFQR…DLVVRLSLEK (68 aa)). A coiled-coil region spans residues 49 to 353 (ETFQRCLEEN…KTSCQESARI (305 aa)). Position 68 is a phosphoserine (Ser-68). Residues Lys-111, Lys-139, Lys-143, Lys-226, Lys-246, and Lys-264 each participate in a glycyl lysine isopeptide (Lys-Gly) (interchain with G-Cter in ubiquitin) cross-link. The interaction with TANK stretch occupies residues 150–257 (LGELQESQSR…SMVSSERNRG (108 aa)). The interval 242–350 (DNHMKSSMVS…SRLKTSCQES (109 aa)) is ubiquitin-binding (UBAN). Positions 246–365 (KSSMVSSERN…MRKRHVEVSQ (120 aa)) are self-association. Positions 251–419 (SSERNRGLQL…LQIHVMECIE (169 aa)) are required for interaction with TNFAIP3. Residue Lys-277 forms a Glycyl lysine isopeptide (Lys-Gly) (interchain with G-Cter in SUMO); alternate linkage. A Glycyl lysine isopeptide (Lys-Gly) (interchain with G-Cter in ubiquitin); alternate cross-link involves residue Lys-277. Residues Lys-283, Lys-285, Lys-292, and Lys-302 each participate in a glycyl lysine isopeptide (Lys-Gly) (interchain with G-Cter in ubiquitin) cross-link. A Glycyl lysine isopeptide (Lys-Gly) (interchain with G-Cter in SUMO); alternate cross-link involves residue Lys-309. Residue Lys-309 forms a Glycyl lysine isopeptide (Lys-Gly) (interchain with G-Cter in ubiquitin); alternate linkage. Glycyl lysine isopeptide (Lys-Gly) (interchain with G-Cter in ubiquitin) cross-links involve residues Lys-321, Lys-325, and Lys-326. Residues 322 to 343 (LAEKKEFLQEQLEQLQREYSRL) form a leucine-zipper region. The tract at residues 356 to 394 (MRKRHVEVSQPPLAPGPAHHSFHLNPSSQRRSPPDEPPK) is disordered. Position 376 is a phosphoserine; by IKKB (Ser-376). The interval 382–419 (SSQRRSPPDEPPKFCCPKCQYQAPDIDTLQIHVMECIE) is interaction with CYLD. Ser-387 is modified (phosphoserine). A CCHC NOA-type zinc finger spans residues 389 to 419 (PDEPPKFCCPKCQYQAPDIDTLQIHVMECIE). Residue Cys-397 coordinates Zn(2+). Residue Lys-399 forms a Glycyl lysine isopeptide (Lys-Gly) (interchain with G-Cter in ubiquitin) linkage. Positions 400, 413, and 417 each coordinate Zn(2+).

In terms of assembly, homodimer; disulfide-linked. Component of the I-kappa-B-kinase (IKK) core complex consisting of CHUK, IKBKB and IKBKG; probably four alpha/CHUK-beta/IKBKB dimers are associated with four gamma/IKBKG subunits. The IKK core complex seems to associate with regulatory or adapter proteins to form a IKK-signalosome holo-complex. The IKK complex associates with TERF2IP/RAP1, leading to promote IKK-mediated phosphorylation of RELA/p65. Part of a complex composed of NCOA2, NCOA3, CHUK/IKKA, IKBKB, IKBKG and CREBBP. Interacts with COPS3, CYLD, NALP2, TRPC4AP and PIDD1. Interacts with ATM; the complex is exported from the nucleus. Interacts with TRAF6. Interacts with IKBKE. Interacts with TANK; the interaction is enhanced by IKBKE and TBK1. Part of a ternary complex consisting of TANK, IKBKB and IKBKG. Interacts with ZFAND5. Interacts with RIPK2. Interacts with TNIP1 and TNFAIP3; TNIP1 facilitates the TNFAIP3-mediated de-ubiquitination of IKBKG. Interacts with TNFAIP3; the interaction is induced by TNF stimulation and by polyubiquitin. Binds (via UBAN region) polyubiquitin; binds both 'Lys-63'-linked and linear polyubiquitin, with higher affinity for linear ubiquitin. Interacts with NLRP10. Interacts with TANK; this interaction increases in response to DNA damage. Interacts with USP10; this interaction increases in response to DNA damage. Interacts with ZC3H12A; this interaction increases in response to DNA damage. Interacts with IFIT5; the interaction synergizes the recruitment of IKK to MAP3K7 and enhances IKK phosphorylation. Interacts with TRIM29; this interaction induces IKBKG/NEMO ubiquitination and proteolytic degradation. Interacts with TRIM13; this interaction leads to IKBKG/NEMO ubiquitination. Interacts with ARFIP2. Interacts with RIPK1. Interacts with (ubiquitinated) BCL10; interaction with polyubiquitinated BCL10 via both 'Lys-63'-linked and linear ubiquitin is required for TCR-induced NF-kappa-B activation. Interacts with MARCHF2; during the late stages of macrophage viral and bacterial infection; the interaction leads to ubiquitination and degradation of IKBKG/NEMO. Post-translationally, phosphorylation at Ser-68 attenuates aminoterminal homodimerization. In terms of processing, polyubiquitinated on Lys-285 through 'Lys-63'; the ubiquitination is mediated downstream of NOD2 and RIPK2 and probably plays a role in signaling by facilitating interactions with ubiquitin domain-containing proteins and activates the NF-kappa-B pathway. Polyubiquitinated on Lys-399 through 'Lys-63'; the ubiquitination is mediated by BCL10, MALT1 and TRAF6 and probably plays a role in signaling by facilitating interactions with ubiquitin domain-containing proteins and activates the NF-kappa-B pathway. Monoubiquitinated on Lys-277 and Lys-309; promotes nuclear export. Polyubiquitinated through 'Lys-27' by TRIM23; involved in antiviral innate and inflammatory responses. Linear polyubiquitinated on Lys-111, Lys-143, Lys-226, Lys-246, Lys-264, Lys-277, Lys-285, Lys-292, Lys-302, Lys-309 and Lys-326; the head-to-tail polyubiquitination is mediated by the LUBAC complex and plays a key role in NF-kappa-B activation. Deubiquitinated by USP10 in a TANK-dependent and -independent manner, leading to the negative regulation of NF-kappa-B signaling upon DNA damage. Ubiquitinated at Lys-326 by MARCHF2 following bacterial and viral infection which leads to its degradation. Polyubiquitinated via 'Lys-29'-linked ubiquitin; leading to lysosomal degradation. Sumoylated on Lys-277 and Lys-309 with SUMO1. Post-translationally, neddylated by TRIM40, resulting in stabilization of NFKBIA and down-regulation of NF-kappa-B activity.

The protein resides in the cytoplasm. It is found in the nucleus. Regulatory subunit of the IKK core complex which phosphorylates inhibitors of NF-kappa-B thus leading to the dissociation of the inhibitor/NF-kappa-B complex and ultimately the degradation of the inhibitor. Its binding to scaffolding polyubiquitin plays a key role in IKK activation by multiple signaling receptor pathways. Can recognize and bind both 'Lys-63'-linked and linear polyubiquitin upon cell stimulation, with a much highr affinity for linear polyubiquitin. Could be implicated in NF-kappa-B-mediated protection from cytokine toxicity. Essential for viral activation of IRF3. Involved in TLR3- and IFIH1-mediated antiviral innate response; this function requires 'Lys-27'-linked polyubiquitination. In Bos taurus (Bovine), this protein is NF-kappa-B essential modulator (IKBKG).